The chain runs to 224 residues: uncharacterized protein (224 aa).

The helical transmembrane segment at 21–41 (LTVILIIPIVYLGVCGCFEIV) threads the bilayer.

Its subcellular location is the membrane. This is an uncharacterized protein from Methanocaldococcus jannaschii (strain ATCC 43067 / DSM 2661 / JAL-1 / JCM 10045 / NBRC 100440) (Methanococcus jannaschii).